The primary structure comprises 474 residues: Glutamate--tRNA ligase (474 aa).

Residues 11-21 carry the 'HIGH' region motif; the sequence is PSPTGFLHIGG. Positions 240–244 match the 'KMSKS' region motif; that stretch reads KLSKR. Lys-243 is an ATP binding site.

Belongs to the class-I aminoacyl-tRNA synthetase family. Glutamate--tRNA ligase type 1 subfamily. As to quaternary structure, monomer.

Its subcellular location is the cytoplasm. It catalyses the reaction tRNA(Glu) + L-glutamate + ATP = L-glutamyl-tRNA(Glu) + AMP + diphosphate. Catalyzes the attachment of glutamate to tRNA(Glu) in a two-step reaction: glutamate is first activated by ATP to form Glu-AMP and then transferred to the acceptor end of tRNA(Glu). The chain is Glutamate--tRNA ligase from Bradyrhizobium sp. (strain BTAi1 / ATCC BAA-1182).